A 130-amino-acid chain; its full sequence is MSGRGKQGGKARAKAKSRSSRAGLQFPVGRVHRLLRKGNYAERVGAGAPVYMAAVLEYLTAEILELAGNAARDNKKTRIIPRHLQLAVRNDEELNKLLGGVTIAQGGVLPNIQAVLLPKKTESHKPGKNK.

The interval 1–22 (MSGRGKQGGKARAKAKSRSSRA) is disordered. At S2 the chain carries N-acetylserine. A Phosphoserine; by RPS6KA5 modification is found at S2. A Citrulline; alternate modification is found at R4. A Symmetric dimethylarginine; by PRMT5; alternate modification is found at R4. K6 and K10 each carry N6-(2-hydroxyisobutyryl)lysine; alternate. At K6 the chain carries N6-(beta-hydroxybutyryl)lysine; alternate. A compositionally biased stretch (basic residues) spans 7 to 19 (QGGKARAKAKSRS). N6-lactoyllysine; alternate is present on K10. K10 bears the N6-succinyllysine; alternate mark. Residues K14 and K16 each participate in a glycyl lysine isopeptide (Lys-Gly) (interchain with G-Cter in ubiquitin) cross-link. K37 bears the N6-(2-hydroxyisobutyryl)lysine; alternate mark. K37 is subject to N6-(beta-hydroxybutyryl)lysine; alternate. At K37 the chain carries N6-crotonyllysine; alternate. N6-(2-hydroxyisobutyryl)lysine occurs at positions 75 and 76. K96 bears the N6-(2-hydroxyisobutyryl)lysine; alternate mark. N6-succinyllysine; alternate is present on K96. Residue K96 is modified to N6-glutaryllysine; alternate. Q105 is modified (N5-methylglutamine). K119 carries the post-translational modification N6-(2-hydroxyisobutyryl)lysine; alternate. N6-crotonyllysine; alternate occurs at positions 119 and 120. Residues K119 and K120 each carry the N6-glutaryllysine; alternate modification. Position 120 is an N6-(beta-hydroxybutyryl)lysine; alternate (K120). K120 participates in a covalent cross-link: Glycyl lysine isopeptide (Lys-Gly) (interchain with G-Cter in ubiquitin); alternate. T121 carries the phosphothreonine; by DCAF1 modification.

It belongs to the histone H2A family. As to quaternary structure, the nucleosome is a histone octamer containing two molecules each of H2A, H2B, H3 and H4 assembled in one H3-H4 heterotetramer and two H2A-H2B heterodimers. The octamer wraps approximately 147 bp of DNA. Deiminated on Arg-4 in granulocytes upon calcium entry. Post-translationally, monoubiquitination of Lys-120 (H2AK119Ub) by RING1, TRIM37 and RNF2/RING2 complex gives a specific tag for epigenetic transcriptional repression and participates in X chromosome inactivation of female mammals. It is involved in the initiation of both imprinted and random X inactivation. Ubiquitinated H2A is enriched in inactive X chromosome chromatin. Ubiquitination of H2A functions downstream of methylation of 'Lys-27' of histone H3 (H3K27me). H2AK119Ub by RNF2/RING2 can also be induced by ultraviolet and may be involved in DNA repair. Following DNA double-strand breaks (DSBs), it is ubiquitinated through 'Lys-63' linkage of ubiquitin moieties by the E2 ligase UBE2N and the E3 ligases RNF8 and RNF168, leading to the recruitment of repair proteins to sites of DNA damage. Ubiquitination at Lys-14 and Lys-16 (H2AK13Ub and H2AK15Ub, respectively) in response to DNA damage is initiated by RNF168 that mediates monoubiquitination at these 2 sites, and 'Lys-63'-linked ubiquitin are then conjugated to monoubiquitin; RNF8 is able to extend 'Lys-63'-linked ubiquitin chains in vitro. Deubiquitinated by USP51 at Lys-14 and Lys-16 (H2AK13Ub and H2AK15Ub, respectively) after damaged DNA is repaired. H2AK119Ub and ionizing radiation-induced 'Lys-63'-linked ubiquitination (H2AK13Ub and H2AK15Ub) are distinct events. In terms of processing, phosphorylation on Ser-2 (H2AS1ph) is enhanced during mitosis. Phosphorylation on Ser-2 by RPS6KA5/MSK1 directly represses transcription. Acetylation of H3 inhibits Ser-2 phosphorylation by RPS6KA5/MSK1. Phosphorylation at Thr-121 (H2AT120ph) by DCAF1 is present in the regulatory region of many tumor suppresor genes and down-regulates their transcription. Symmetric dimethylation on Arg-4 by the PRDM1/PRMT5 complex may play a crucial role in the germ-cell lineage. Post-translationally, glutamine methylation at Gln-105 (H2AQ104me) by FBL is specifically dedicated to polymerase I. It is present at 35S ribosomal DNA locus and impairs binding of the FACT complex. In terms of processing, crotonylation (Kcr) is specifically present in male germ cells and marks testis-specific genes in post-meiotic cells, including X-linked genes that escape sex chromosome inactivation in haploid cells. Crotonylation marks active promoters and enhancers and confers resistance to transcriptional repressors. It is also associated with post-meiotically activated genes on autosomes. Hydroxybutyrylation of histones is induced by starvation. Post-translationally, lactylated in macrophages by EP300/P300 by using lactoyl-CoA directly derived from endogenous or exogenous lactate, leading to stimulates gene transcription.

It is found in the nucleus. The protein localises to the chromosome. Its function is as follows. Core component of nucleosome. Nucleosomes wrap and compact DNA into chromatin, limiting DNA accessibility to the cellular machineries which require DNA as a template. Histones thereby play a central role in transcription regulation, DNA repair, DNA replication and chromosomal stability. DNA accessibility is regulated via a complex set of post-translational modifications of histones, also called histone code, and nucleosome remodeling. This Mus musculus (Mouse) protein is Histone H2A type 2-B.